The primary structure comprises 239 residues: Tetrahydromethanopterin S-methyltransferase subunit A (239 aa).

The Cytoplasmic portion of the chain corresponds to 1 to 215; it reads MADKKAPAAG…EAAMIAKFNS (215 aa). Residue histidine 85 coordinates 5-hydroxybenzimidazolylcob(I)amide. A helical transmembrane segment spans residues 216 to 238; sequence GYYNGKIQGIAIGLFLSIVIFSL. Position 239 (leucine 239) is a topological domain, extracellular.

It belongs to the MtrA family. The complex is composed of 8 subunits; MtrA, MtrB, MtrC, MtrD, MtrE, MtrF, MtrG and MtrH. The cofactor is 5-hydroxybenzimidazolylcob(I)amide.

The protein localises to the cell membrane. It catalyses the reaction 5-methyl-5,6,7,8-tetrahydromethanopterin + coenzyme M + 2 Na(+)(in) = 5,6,7,8-tetrahydromethanopterin + methyl-coenzyme M + 2 Na(+)(out). Its pathway is one-carbon metabolism; methanogenesis from CO(2); methyl-coenzyme M from 5,10-methylene-5,6,7,8-tetrahydromethanopterin: step 2/2. Functionally, part of a complex that catalyzes the formation of methyl-coenzyme M and tetrahydromethanopterin from coenzyme M and methyl-tetrahydromethanopterin. This is an energy-conserving, sodium-ion translocating step. The sequence is that of Tetrahydromethanopterin S-methyltransferase subunit A from Methanococcus maripaludis (strain DSM 14266 / JCM 13030 / NBRC 101832 / S2 / LL).